Reading from the N-terminus, the 145-residue chain is UPF0260 protein VC_1058 (145 aa).

This sequence belongs to the UPF0260 family.

In Vibrio cholerae serotype O1 (strain ATCC 39315 / El Tor Inaba N16961), this protein is UPF0260 protein VC_1058.